The chain runs to 459 residues: Cysteine--tRNA ligase (459 aa).

Residue Cys-28 participates in Zn(2+) binding. Positions 30–40 match the 'HIGH' region motif; the sequence is VTVYDLCHFGH. Residues Cys-209, His-234, and Glu-238 each coordinate Zn(2+). The short motif at 266–270 is the 'KMSKS' region element; it reads KMSKS. Position 269 (Lys-269) interacts with ATP.

Belongs to the class-I aminoacyl-tRNA synthetase family. In terms of assembly, monomer. It depends on Zn(2+) as a cofactor.

It is found in the cytoplasm. It catalyses the reaction tRNA(Cys) + L-cysteine + ATP = L-cysteinyl-tRNA(Cys) + AMP + diphosphate. The protein is Cysteine--tRNA ligase of Actinobacillus pleuropneumoniae serotype 3 (strain JL03).